The following is a 210-amino-acid chain: Imidazoleglycerol-phosphate dehydratase (210 aa).

It belongs to the imidazoleglycerol-phosphate dehydratase family.

The protein localises to the cytoplasm. The catalysed reaction is D-erythro-1-(imidazol-4-yl)glycerol 3-phosphate = 3-(imidazol-4-yl)-2-oxopropyl phosphate + H2O. It participates in amino-acid biosynthesis; L-histidine biosynthesis; L-histidine from 5-phospho-alpha-D-ribose 1-diphosphate: step 6/9. The polypeptide is Imidazoleglycerol-phosphate dehydratase (Mycobacterium leprae (strain Br4923)).